A 103-amino-acid polypeptide reads, in one-letter code: ATP synthase F(0) complex subunit g, mitochondrial (103 aa).

A2 carries the N-acetylalanine modification. N6-acetyllysine is present on residues K11, K24, K35, and K54.

This sequence belongs to the ATPase g subunit family. In terms of assembly, component of the ATP synthase complex composed at least of ATP5F1A/subunit alpha, ATP5F1B/subunit beta, ATP5MC1/subunit c (homooctomer), MT-ATP6/subunit a, MT-ATP8/subunit 8, ATP5ME/subunit e, ATP5MF/subunit f, ATP5MG/subunit g, ATP5MK/subunit k, ATP5MJ/subunit j, ATP5F1C/subunit gamma, ATP5F1D/subunit delta, ATP5F1E/subunit epsilon, ATP5PF/subunit F6, ATP5PB/subunit b, ATP5PD/subunit d, ATP5PO/subunit OSCP. ATP synthase complex consists of a soluble F(1) head domain (subunits alpha(3) and beta(3)) - the catalytic core - and a membrane F(0) domain - the membrane proton channel (subunits c, a, 8, e, f, g, k and j). These two domains are linked by a central stalk (subunits gamma, delta, and epsilon) rotating inside the F1 region and a stationary peripheral stalk (subunits F6, b, d, and OSCP).

It localises to the mitochondrion. The protein localises to the mitochondrion inner membrane. Its function is as follows. Subunit g, of the mitochondrial membrane ATP synthase complex (F(1)F(0) ATP synthase or Complex V) that produces ATP from ADP in the presence of a proton gradient across the membrane which is generated by electron transport complexes of the respiratory chain. ATP synthase complex consist of a soluble F(1) head domain - the catalytic core - and a membrane F(1) domain - the membrane proton channel. These two domains are linked by a central stalk rotating inside the F(1) region and a stationary peripheral stalk. During catalysis, ATP synthesis in the catalytic domain of F(1) is coupled via a rotary mechanism of the central stalk subunits to proton translocation. In vivo, can only synthesize ATP although its ATP hydrolase activity can be activated artificially in vitro. Part of the complex F(0) domain. The sequence is that of ATP synthase F(0) complex subunit g, mitochondrial from Mus musculus (Mouse).